The primary structure comprises 510 residues: MNKELVLVVDFGGQYNQLIARRVRENRVYCEIVPYTTSIEDIKEKAPKGIIFTGGPNSVYGENAPRVQKELFDLGIPVLGICYGDQLMAHSLEGEVTSPEKREYGKTDVNLDNSSLLFKDMKEKDQCWMSHTDYISKVPKGFKIIATTDECPCAAMENAEKKLYGVQFHPEVEHTLFGKKMLKNFLFNVCNLKGDWSMSSFAEQQIKAIKEKVGDKKVICALSGGVDSSVAAVIVHKAIGKQLTCIFVDHGLLRKDEGDQVEKIFKDQFDMNLIRVNAQDRFLGKLKGVSDPERKRKIIGEEFIRVFEEEAKKLGDISFLVQGTIYPDIVESGTNTSATIKSHHNVGGLPEDMEFKLIEPLRELFKDEVRAVGEELGIPHKLVWRQPFPGPGLAIRVLGEVTEEKLAITREADAIFREEIAKAGLEEKIWQYFACLPNIQSVGVMGDERTYCHTIALRAVTSSDAMTSDWARIPYEVLDKVSRRIVNEVKEVNRIVYDVTSKPPATIEWE.

Residues 5–195 (LVLVVDFGGQ…LFNVCNLKGD (191 aa)) form the Glutamine amidotransferase type-1 domain. Cys82 (nucleophile) is an active-site residue. Active-site residues include His169 and Glu171. Residues 196–385 (WSMSSFAEQQ…LGIPHKLVWR (190 aa)) enclose the GMPS ATP-PPase domain. 223–229 (SGGVDSS) lines the ATP pocket.

In terms of assembly, homodimer.

The catalysed reaction is XMP + L-glutamine + ATP + H2O = GMP + L-glutamate + AMP + diphosphate + 2 H(+). Its pathway is purine metabolism; GMP biosynthesis; GMP from XMP (L-Gln route): step 1/1. Catalyzes the synthesis of GMP from XMP. The chain is GMP synthase [glutamine-hydrolyzing] from Clostridium botulinum (strain Okra / Type B1).